We begin with the raw amino-acid sequence, 143 residues long: Large ribosomal subunit protein uL13 (143 aa).

It belongs to the universal ribosomal protein uL13 family. Part of the 50S ribosomal subunit.

In terms of biological role, this protein is one of the early assembly proteins of the 50S ribosomal subunit, although it is not seen to bind rRNA by itself. It is important during the early stages of 50S assembly. This chain is Large ribosomal subunit protein uL13, found in Dehalococcoides mccartyi (strain CBDB1).